The primary structure comprises 337 residues: DNA-directed RNA polymerase subunit alpha (337 aa).

The interval 1-233 (MIREKVTVST…DLFIPFLHME (233 aa)) is alpha N-terminal domain (alpha-NTD). The alpha C-terminal domain (alpha-CTD) stretch occupies residues 266-337 (KLALKSIFID…FAIDLPKNQF (72 aa)).

This sequence belongs to the RNA polymerase alpha chain family. As to quaternary structure, in plastids the minimal PEP RNA polymerase catalytic core is composed of four subunits: alpha, beta, beta', and beta''. When a (nuclear-encoded) sigma factor is associated with the core the holoenzyme is formed, which can initiate transcription.

It localises to the plastid. It is found in the chloroplast. It catalyses the reaction RNA(n) + a ribonucleoside 5'-triphosphate = RNA(n+1) + diphosphate. Its function is as follows. DNA-dependent RNA polymerase catalyzes the transcription of DNA into RNA using the four ribonucleoside triphosphates as substrates. The polypeptide is DNA-directed RNA polymerase subunit alpha (Ipomoea purpurea (Common morning glory)).